The sequence spans 252 residues: MVPVGPERGANSLFSLRFTTFAVGTVSLPLFAFLFCIVWSLLFNFSETTATHCHVPNYLPSVSAAIGGETPQRYIWRLCIGLHSAPRFLVGVAYLHYYQGTPCSSPAYPRLCHLNFLLNCCEIFFLILLTYVSSSENYEVHKLGFMAFMLFSVGYMFVTCSLWRVARKGSGSLEERTSYAWKKRLFGFYLLMFLSSILVYIWHNMYCEAGVYTVFALLEYLVVLSNMGFHMTAWWDFGNKELMICSPGDKRI.

Residues 1 to 22 are Cytoplasmic-facing; that stretch reads MVPVGPERGANSLFSLRFTTFA. The chain crosses the membrane as a helical span at residues 23–43; the sequence is VGTVSLPLFAFLFCIVWSLLF. Topologically, residues 44–77 are lumenal; the sequence is NFSETTATHCHVPNYLPSVSAAIGGETPQRYIWR. Residues 78 to 98 traverse the membrane as a helical segment; sequence LCIGLHSAPRFLVGVAYLHYY. Over 99-111 the chain is Cytoplasmic; sequence QGTPCSSPAYPRL. A helical membrane pass occupies residues 112–132; that stretch reads CHLNFLLNCCEIFFLILLTYV. Over 133 to 142 the chain is Lumenal; that stretch reads SSSENYEVHK. A helical transmembrane segment spans residues 143-163; it reads LGFMAFMLFSVGYMFVTCSLW. Residues 164–184 lie on the Cytoplasmic side of the membrane; the sequence is RVARKGSGSLEERTSYAWKKR. The chain crosses the membrane as a helical span at residues 185–205; sequence LFGFYLLMFLSSILVYIWHNM. At 206–208 the chain is on the lumenal side; the sequence is YCE. Residues 209–229 form a helical membrane-spanning segment; sequence AGVYTVFALLEYLVVLSNMGF. Residues 230–252 lie on the Cytoplasmic side of the membrane; that stretch reads HMTAWWDFGNKELMICSPGDKRI.

Belongs to the PGAP2 family.

It is found in the golgi apparatus membrane. Functionally, involved in the fatty acid remodeling steps of GPI-anchor maturation where the unsaturated acyl chain at sn-2 of inositol phosphate is replaced by a saturated stearoyl chain. May catalyze the second step of the fatty acid remodeling, by reacylating a lyso-GPI intermediate at sn-2 of inositol phosphate by a saturated chain. The fatty acid remodeling steps is critical for the integration of GPI-APs into lipid rafts. The chain is Acyltransferase PGAP2 from Xenopus tropicalis (Western clawed frog).